We begin with the raw amino-acid sequence, 57 residues long: Small ribosomal subunit protein bS21 (57 aa).

The segment at 31 to 57 (EVRKRKHYEKPSVRRKKKSEAARKRKF) is disordered. Over residues 33–57 (RKRKHYEKPSVRRKKKSEAARKRKF) the composition is skewed to basic residues.

Belongs to the bacterial ribosomal protein bS21 family.

This chain is Small ribosomal subunit protein bS21 (rpsU), found in Halalkalibacterium halodurans (strain ATCC BAA-125 / DSM 18197 / FERM 7344 / JCM 9153 / C-125) (Bacillus halodurans).